Reading from the N-terminus, the 281-residue chain is Tumor necrosis factor ligand superfamily member 10 (281 aa).

Topologically, residues 1–17 (MAMMEVQGGPSLGQTCV) are cytoplasmic. A helical; Signal-anchor for type II membrane protein transmembrane segment spans residues 18–38 (LIVIFTVLLQSLCVAVTYVYF). The Extracellular portion of the chain corresponds to 39–281 (TNELKQMQDK…ASFFGAFLVG (243 aa)). A THD domain is found at 122–280 (VAAHITGTRG…EASFFGAFLV (159 aa)). The segment at 124-144 (AHITGTRGRSNTLSSPNSKNE) is disordered. Polar residues predominate over residues 130-141 (RGRSNTLSSPNS). Cys230 contributes to the Zn(2+) binding site.

It belongs to the tumor necrosis factor family. As to quaternary structure, homotrimer. One TNFSF10 homotrimer interacts with three TNFSF10A mononers. One TNFSF10 homotrimer interacts with three TNFSF10B mononers. In terms of processing, tyrosine phosphorylated by PKDCC/VLK. Widespread; most predominant in spleen, lung and prostate.

It localises to the cell membrane. The protein resides in the secreted. Cytokine that binds to TNFRSF10A/TRAILR1, TNFRSF10B/TRAILR2, TNFRSF10C/TRAILR3, TNFRSF10D/TRAILR4 and possibly also to TNFRSF11B/OPG. Induces apoptosis. Its activity may be modulated by binding to the decoy receptors TNFRSF10C/TRAILR3, TNFRSF10D/TRAILR4 and TNFRSF11B/OPG that cannot induce apoptosis. The sequence is that of Tumor necrosis factor ligand superfamily member 10 (TNFSF10) from Homo sapiens (Human).